Here is a 221-residue protein sequence, read N- to C-terminus: Large ribosomal subunit protein uL3 (221 aa).

Belongs to the universal ribosomal protein uL3 family. Part of the 50S ribosomal subunit. Forms a cluster with proteins L14 and L19.

Functionally, one of the primary rRNA binding proteins, it binds directly near the 3'-end of the 23S rRNA, where it nucleates assembly of the 50S subunit. This chain is Large ribosomal subunit protein uL3, found in Nocardia farcinica (strain IFM 10152).